Consider the following 159-residue polypeptide: Phosphopantetheine adenylyltransferase (159 aa).

An ATP-binding site is contributed by H16. Residues K40, M72, and R86 each coordinate substrate. ATP is bound by residues 87 to 89 (GLR), E97, and 122 to 128 (YQYLSAS).

The protein belongs to the bacterial CoaD family. In terms of assembly, homohexamer. It depends on Mg(2+) as a cofactor.

The protein resides in the cytoplasm. The enzyme catalyses (R)-4'-phosphopantetheine + ATP + H(+) = 3'-dephospho-CoA + diphosphate. The protein operates within cofactor biosynthesis; coenzyme A biosynthesis; CoA from (R)-pantothenate: step 4/5. Its function is as follows. Reversibly transfers an adenylyl group from ATP to 4'-phosphopantetheine, yielding dephospho-CoA (dPCoA) and pyrophosphate. This is Phosphopantetheine adenylyltransferase from Dehalococcoides mccartyi (strain CBDB1).